The primary structure comprises 520 residues: MSLLSLSWLGLRPVAASPWLLLLVVGASWLLARILAWTYAFYHNGRRLRCFPQPRKQNWFLGHLGLVTPTEEGLRVLTQLVATYPQGFVRWLGPITPIINLCHPDIVRSVINTSDAITDKDIVFYKTLKPWLGDGLLLSVGDKWRHHRRLLTPAFHFNILKPYIKIFSKSANIMHAKWQRLAMEGSTCLDVFEHISLMTLDSLQKCIFSFDSNCQEKPSEYITAIMELSALVVKRNNQFFRYKDFLYFLTPCGRRFHRACRLVHDFTDAVIQERRRTLTSQGVDDFLQAKAKSKTLDFIDVLLLSEDKNGKELSDEDIRAEADTFMFGGHDTTASGLSWVLYNLARHPEYQERCRQEVQELLKDREPKEIEWDDLAQLPFLTMCLKESLRLHPPIPTFARGCTQDVVLPDSRVIPKGNVCNINIFAIHHNPSVWPDPEVYDPFRFDPENAQKRSPMAFIPFSAGPRNCIGQKFAMAEMKVVLALTLLRFRILPDHREPRRTPEIVLRAEDGLWLRVEPLG.

Residues 15-37 (AASPWLLLLVVGASWLLARILAW) traverse the membrane as a helical segment. Cysteine 468 provides a ligand contact to heme.

Belongs to the cytochrome P450 family. Requires heme as cofactor. In terms of tissue distribution, expressed in the epithelium of seminal vesicles, in renal cortex, in adult and fetal liver, in epidermis, in corneal epithelium, in sweat glands, hair follicles, epithelial linings of the ampulla of vas deferens and of the stomach and small intestine, as well as in the transitional epithelium of the bladder and ureter (at protein level). In the epidermis, expressed from the basal cell to the granular cell layers. In the corneal epithelium, expressed in all cell layers. Also detected in prostate. Up-regulated in the epidermis of psoriatic lesions.

It localises to the endoplasmic reticulum membrane. The protein resides in the microsome membrane. The enzyme catalyses an organic molecule + reduced [NADPH--hemoprotein reductase] + O2 = an alcohol + oxidized [NADPH--hemoprotein reductase] + H2O + H(+). It carries out the reaction (5Z,8Z,11Z,14Z)-eicosatetraenoate + reduced [NADPH--hemoprotein reductase] + O2 = (18R)-hydroxy-(5Z,8Z,11Z,14Z)-eicosatetraenoate + oxidized [NADPH--hemoprotein reductase] + H2O + H(+). The catalysed reaction is (4Z,7Z,10Z,13Z,16Z)-docosapentaenoate + reduced [NADPH--hemoprotein reductase] + O2 = 20-hydroxy-(4Z,7Z,10Z,13Z,16Z)-docosapentaenoate + oxidized [NADPH--hemoprotein reductase] + H2O + H(+). It catalyses the reaction prostaglandin H1 + reduced [NADPH--hemoprotein reductase] + O2 = 19-hydroxyprostaglandin H1 + oxidized [NADPH--hemoprotein reductase] + H2O + H(+). The enzyme catalyses prostaglandin H2 + reduced [NADPH--hemoprotein reductase] + O2 = 19-hydroxyprostaglandin H2 + oxidized [NADPH--hemoprotein reductase] + H2O + H(+). It carries out the reaction prostaglandin I2 + reduced [NADPH--hemoprotein reductase] + O2 = 19-hydroxy-prostaglandin I2 + oxidized [NADPH--hemoprotein reductase] + H2O + H(+). The catalysed reaction is (4Z,7Z,10Z,13Z,16Z,19Z)-docosahexaenoate + reduced [NADPH--hemoprotein reductase] + O2 = 10,11-epoxy-(4Z,7Z,13Z,16Z,19Z)-docosapentaenoate + oxidized [NADPH--hemoprotein reductase] + H2O + H(+). It catalyses the reaction (4Z,7Z,10Z,13Z,16Z,19Z)-docosahexaenoate + reduced [NADPH--hemoprotein reductase] + O2 = 13,14-epoxy-(4Z,7Z,10Z,16Z,19Z)-docosapentaenoate + oxidized [NADPH--hemoprotein reductase] + H2O + H(+). The enzyme catalyses (4Z,7Z,10Z,13Z,16Z,19Z)-docosahexaenoate + reduced [NADPH--hemoprotein reductase] + O2 = 16,17-epoxy-(4Z,7Z,10Z,13Z,19Z)-docosapentaenoate + oxidized [NADPH--hemoprotein reductase] + H2O + H(+). It carries out the reaction (4Z,7Z,10Z,13Z,16Z,19Z)-docosahexaenoate + reduced [NADPH--hemoprotein reductase] + O2 = 19,20-epoxy-(4Z,7Z,10Z,13Z,16Z)-docosapentaenoate + oxidized [NADPH--hemoprotein reductase] + H2O + H(+). The catalysed reaction is (7Z,10Z,13Z,16Z,19Z)-docosapentaenoate + reduced [NADPH--hemoprotein reductase] + O2 = 10,11-epoxy-(7Z,13Z,16Z,19Z)-docosatetraenoate + oxidized [NADPH--hemoprotein reductase] + H2O + H(+). It catalyses the reaction (7Z,10Z,13Z,16Z,19Z)-docosapentaenoate + reduced [NADPH--hemoprotein reductase] + O2 = 13,14-epoxy-(7Z,10Z,16Z,19Z)-docosatetraenoate + oxidized [NADPH--hemoprotein reductase] + H2O + H(+). The enzyme catalyses (7Z,10Z,13Z,16Z,19Z)-docosapentaenoate + reduced [NADPH--hemoprotein reductase] + O2 = 16,17-epoxy-(7Z,10Z,13Z,19Z)-docosatetraenoate + oxidized [NADPH--hemoprotein reductase] + H2O + H(+). It carries out the reaction (7Z,10Z,13Z,16Z,19Z)-docosapentaenoate + reduced [NADPH--hemoprotein reductase] + O2 = 19,20-epoxy-(7Z,10Z,13Z,16Z)-docosatetraenoate + oxidized [NADPH--hemoprotein reductase] + H2O + H(+). It participates in lipid metabolism; fatty acid metabolism. In terms of biological role, a cytochrome P450 monooxygenase involved in the metabolism of endogenous polyunsaturated fatty acids (PUFAs) and their oxygenated derivatives (oxylipins). Mechanistically, uses molecular oxygen inserting one oxygen atom into a substrate, and reducing the second into a water molecule, with two electrons provided by NADPH via cytochrome P450 reductase (CPR; NADPH-ferrihemoprotein reductase). Catalyzes the hydroxylation of carbon hydrogen bonds, with preference for omega-1 and omega-2 positions. Hydroxylates (5Z,8Z,11Z,14Z)-eicosatetraenoic acid (arachidonate) predominantly at omega-2 position to form (18R)-hydroxyeicosatetraenoic acid (18R-HETE). Exhibits omega-1 hydroxylase activity toward prostaglandin (PG) H1, PGH2 and PGI2. Catalyzes the epoxidation of double bonds of PUFAs, including docosahexaenoic and docosapentaenoic acids. Shows little activity against PGD2, PGE1, PGE2, PGF2alpha, and leukotriene B4. This chain is Cytochrome P450 4F8, found in Homo sapiens (Human).